Reading from the N-terminus, the 1162-residue chain is Isoleucine--tRNA ligase (1162 aa).

A 'HIGH' region motif is present at residues 50–60 (PSANGMPGIHH). Residues 710–714 (KMSKR) carry the 'KMSKS' region motif. Lysine 713 is an ATP binding site.

This sequence belongs to the class-I aminoacyl-tRNA synthetase family. IleS type 2 subfamily. In terms of assembly, monomer. Requires Zn(2+) as cofactor.

The protein localises to the cytoplasm. It carries out the reaction tRNA(Ile) + L-isoleucine + ATP = L-isoleucyl-tRNA(Ile) + AMP + diphosphate. In terms of biological role, catalyzes the attachment of isoleucine to tRNA(Ile). As IleRS can inadvertently accommodate and process structurally similar amino acids such as valine, to avoid such errors it has two additional distinct tRNA(Ile)-dependent editing activities. One activity is designated as 'pretransfer' editing and involves the hydrolysis of activated Val-AMP. The other activity is designated 'posttransfer' editing and involves deacylation of mischarged Val-tRNA(Ile). This Bacteroides thetaiotaomicron (strain ATCC 29148 / DSM 2079 / JCM 5827 / CCUG 10774 / NCTC 10582 / VPI-5482 / E50) protein is Isoleucine--tRNA ligase.